The chain runs to 879 residues: Serine/threonine-protein kinase greatwall (879 aa).

Met-1 is subject to N-acetylmethionine. The interval 1-23 is disordered; the sequence is MDPTAGSKKEPGGGAATEEGVNR. In terms of domain architecture, Protein kinase spans 35 to 835; it reads FSIVKPISRG…MKELKRHPLF (801 aa). Residues 41-49 and Lys-62 each bind ATP; that span reads ISRGAFGKV. Asp-156 acts as the Proton acceptor in catalysis. A phosphothreonine mark is found at Thr-207 and Thr-222. 3 positions are modified to phosphoserine: Ser-293, Ser-370, and Ser-453. Phosphothreonine is present on Thr-519. Phosphoserine is present on residues Ser-552 and Ser-556. Residues 566–632 are disordered; that stretch reads SMNSDSSFPG…VENPAVQESN (67 aa). Over residues 589–598 the composition is skewed to basic and acidic residues; the sequence is DSDRSIKESS. Ser-631, Ser-657, and Ser-668 each carry phosphoserine. The tract at residues 700 to 728 is disordered; the sequence is KRRSCMPHQQTPNQIKSGTPYRTPKSVRR. The span at 706-716 shows a compositional bias: polar residues; that stretch reads PHQQTPNQIKS. Residue Thr-722 is modified to Phosphothreonine. Position 725 is a phosphoserine (Ser-725). Residue Thr-741 is modified to Phosphothreonine. Residues 836 to 879 form the AGC-kinase C-terminal domain; the sequence is SDVDWENLQHQTMPFIPQPDDETDTSYFEARNTAQHLTVSGFSL. Phosphoserine is present on residues Ser-875 and Ser-878.

This sequence belongs to the protein kinase superfamily. AGC Ser/Thr protein kinase family. In terms of processing, phosphorylation at Thr-741 by CDK1 during M phase activates its kinase activity. Maximum phosphorylation occurs in prometaphase.

It is found in the cytoplasm. The protein resides in the cytoskeleton. Its subcellular location is the microtubule organizing center. The protein localises to the centrosome. It localises to the nucleus. It is found in the cleavage furrow. The catalysed reaction is L-seryl-[protein] + ATP = O-phospho-L-seryl-[protein] + ADP + H(+). The enzyme catalyses L-threonyl-[protein] + ATP = O-phospho-L-threonyl-[protein] + ADP + H(+). In terms of biological role, serine/threonine kinase that plays a key role in M phase by acting as a regulator of mitosis entry and maintenance. Acts by promoting the inactivation of protein phosphatase 2A (PP2A) during M phase: does not directly inhibit PP2A but acts by mediating phosphorylation and subsequent activation of ARPP19 and ENSA at 'Ser-62' and 'Ser-67', respectively. ARPP19 and ENSA are phosphatase inhibitors that specifically inhibit the PPP2R2D (PR55-delta) subunit of PP2A. Inactivation of PP2A during M phase is essential to keep cyclin-B1-CDK1 activity high. Following DNA damage, it is also involved in checkpoint recovery by being inhibited. Phosphorylates histone protein in vitro; however such activity is unsure in vivo. May be involved in megakaryocyte differentiation. This Homo sapiens (Human) protein is Serine/threonine-protein kinase greatwall (MASTL).